A 109-amino-acid polypeptide reads, in one-letter code: uncharacterized protein (109 aa).

This is an uncharacterized protein from Bacillus subtilis (strain 168).